The chain runs to 487 residues: Cobyric acid synthase (487 aa).

The 187-residue stretch at 249 to 435 folds into the GATase cobBQ-type domain; it reads GIDIAIVRLP…IHGIFDEGDF (187 aa). Residue C330 is the Nucleophile of the active site. Residue H427 is part of the active site.

It belongs to the CobB/CobQ family. CobQ subfamily.

The protein operates within cofactor biosynthesis; adenosylcobalamin biosynthesis. Its function is as follows. Catalyzes amidations at positions B, D, E, and G on adenosylcobyrinic A,C-diamide. NH(2) groups are provided by glutamine, and one molecule of ATP is hydrogenolyzed for each amidation. The chain is Cobyric acid synthase from Clostridium perfringens (strain ATCC 13124 / DSM 756 / JCM 1290 / NCIMB 6125 / NCTC 8237 / Type A).